Here is a 339-residue protein sequence, read N- to C-terminus: Heat-inducible transcription repressor HrcA (339 aa).

Belongs to the HrcA family.

In terms of biological role, negative regulator of class I heat shock genes (grpE-dnaK-dnaJ and groELS operons). Prevents heat-shock induction of these operons. The sequence is that of Heat-inducible transcription repressor HrcA from Paraburkholderia phymatum (strain DSM 17167 / CIP 108236 / LMG 21445 / STM815) (Burkholderia phymatum).